A 226-amino-acid chain; its full sequence is Large ribosomal subunit protein uL3 (226 aa).

Residues 135-158 (MSSQRASHGNSRSHNVPGSIGMAQ) form a disordered region. Residues 137-150 (SQRASHGNSRSHNV) are compositionally biased toward polar residues. Q158 is subject to N5-methylglutamine.

Belongs to the universal ribosomal protein uL3 family. As to quaternary structure, part of the 50S ribosomal subunit. Forms a cluster with proteins L14 and L19. In terms of processing, methylated by PrmB.

One of the primary rRNA binding proteins, it binds directly near the 3'-end of the 23S rRNA, where it nucleates assembly of the 50S subunit. This chain is Large ribosomal subunit protein uL3, found in Polaromonas naphthalenivorans (strain CJ2).